The sequence spans 108 residues: Phosphoribosyl-ATP pyrophosphatase (108 aa).

This sequence belongs to the PRA-PH family.

The protein resides in the cytoplasm. The catalysed reaction is 1-(5-phospho-beta-D-ribosyl)-ATP + H2O = 1-(5-phospho-beta-D-ribosyl)-5'-AMP + diphosphate + H(+). It participates in amino-acid biosynthesis; L-histidine biosynthesis; L-histidine from 5-phospho-alpha-D-ribose 1-diphosphate: step 2/9. In Pelobacter propionicus (strain DSM 2379 / NBRC 103807 / OttBd1), this protein is Phosphoribosyl-ATP pyrophosphatase.